We begin with the raw amino-acid sequence, 894 residues long: Microsomal triglyceride transfer protein large subunit (894 aa).

An N-terminal signal peptide occupies residues 1 to 18 (MILLAVLFLCFISSYSAS). The Vitellogenin domain maps to 28-662 (LNNDRLYKLK…YVGKTPLHAI (635 aa)). Cysteine 174 and cysteine 194 form a disulfide bridge.

As to quaternary structure, heterodimer; heterodimerizes with the protein disulfide isomerase (P4HB/PDI). Interacts with APOB. Interacts with PRAP1.

The protein resides in the endoplasmic reticulum. It localises to the golgi apparatus. The catalysed reaction is a 1,2-diacyl-sn-glycero-3-phosphocholine(in) = a 1,2-diacyl-sn-glycero-3-phosphocholine(out). The enzyme catalyses a 1,2-diacyl-sn-glycero-3-phosphoethanolamine(in) = a 1,2-diacyl-sn-glycero-3-phosphoethanolamine(out). It carries out the reaction a cholesterol ester(in) = a cholesterol ester(out). It catalyses the reaction a triacyl-sn-glycerol(in) = a triacyl-sn-glycerol(out). Functionally, catalyzes the transport of triglyceride, cholesteryl ester, and phospholipid between phospholipid surfaces. Required for the assembly and secretion of plasma lipoproteins that contain apolipoprotein B. May be involved in regulating cholesteryl ester biosynthesis in cells that produce lipoproteins. This Sus scrofa (Pig) protein is Microsomal triglyceride transfer protein large subunit (MTTP).